The primary structure comprises 152 residues: Small ribosomal subunit protein uS15 (152 aa).

The span at Met-1–Lys-11 shows a compositional bias: basic residues. The interval Met-1 to Glu-24 is disordered.

This sequence belongs to the universal ribosomal protein uS15 family. Part of the 30S ribosomal subunit.

The sequence is that of Small ribosomal subunit protein uS15 from Methanosarcina mazei (strain ATCC BAA-159 / DSM 3647 / Goe1 / Go1 / JCM 11833 / OCM 88) (Methanosarcina frisia).